The primary structure comprises 213 residues: Protein-L-isoaspartate O-methyltransferase (213 aa).

The active site involves serine 64.

It belongs to the methyltransferase superfamily. L-isoaspartyl/D-aspartyl protein methyltransferase family.

The protein localises to the cytoplasm. It catalyses the reaction [protein]-L-isoaspartate + S-adenosyl-L-methionine = [protein]-L-isoaspartate alpha-methyl ester + S-adenosyl-L-homocysteine. Catalyzes the methyl esterification of L-isoaspartyl residues in peptides and proteins that result from spontaneous decomposition of normal L-aspartyl and L-asparaginyl residues. It plays a role in the repair and/or degradation of damaged proteins. The chain is Protein-L-isoaspartate O-methyltransferase from Flavobacterium johnsoniae (strain ATCC 17061 / DSM 2064 / JCM 8514 / BCRC 14874 / CCUG 350202 / NBRC 14942 / NCIMB 11054 / UW101) (Cytophaga johnsonae).